Here is a 216-residue protein sequence, read N- to C-terminus: Probable nicotinate-nucleotide adenylyltransferase (216 aa).

This sequence belongs to the NadD family.

It carries out the reaction nicotinate beta-D-ribonucleotide + ATP + H(+) = deamido-NAD(+) + diphosphate. The protein operates within cofactor biosynthesis; NAD(+) biosynthesis; deamido-NAD(+) from nicotinate D-ribonucleotide: step 1/1. Its function is as follows. Catalyzes the reversible adenylation of nicotinate mononucleotide (NaMN) to nicotinic acid adenine dinucleotide (NaAD). The chain is Probable nicotinate-nucleotide adenylyltransferase from Marinobacter nauticus (strain ATCC 700491 / DSM 11845 / VT8) (Marinobacter aquaeolei).